A 200-amino-acid polypeptide reads, in one-letter code: Large ribosomal subunit protein bL9 (200 aa).

It belongs to the bacterial ribosomal protein bL9 family.

Binds to the 23S rRNA. The sequence is that of Large ribosomal subunit protein bL9 from Ruegeria pomeroyi (strain ATCC 700808 / DSM 15171 / DSS-3) (Silicibacter pomeroyi).